A 574-amino-acid polypeptide reads, in one-letter code: MLNLFRNRKRNGAGPTIKKAQKMPELDDFLSNQDYEGAISLLNHKLKAGNLDREEEDSLQLWLAHCYYRLRNYEEAANVYTFLMNKDDAPAELGVYLACCKFYLKQYIEAKSIAEKCPKTPLCIRLMMNVSLRLNDEKRILTFHSSLGDTLEDRLSLAGVNYSRMHYQDAIEVYTSVLQTSPNLIGLNVNMALCYAKMDYPHVAYNLIKNYLRNFPNSPFAKNLLLSVLYRTITSKTTVDEKSELARNIDQEGLTMVSDMEALLKQKLYPEIEYICKHNLVLFKNCETALQVLPSLMKHIPEARVNLILYHLNKNNVKDAISLCKDFDPVTPYEFLVKALTFLRHGQETNSREHLKIAENFFQMVGESGLVQDTIAGRQSSAAYLFLSFKFDDVITYLKSIEAYFTNNDDFLLNLAQAYLMYKNYVAAEKLFIRVSGPERDKILYKSMLARCYVRNKKPQSAWDMMLKTNNPSDRMSLLKVIAQDCYIANEFYYASKAFHEIEISDPTTENWSGKRGACAGLFRQLANHKTDPILISQMREVVHLVAMKPHSNCEFLLKVVRNWAETHNVNIIN.

3 TPR repeats span residues 20–52, 57–90, and 151–184; these read AQKM…GNLD, DSLQ…DDAP, and LEDR…SPNL.

This sequence belongs to the IFT56 family. As to quaternary structure, component of the IFT complex B composed of at least che-2, che-13, dyf-1, dyf-3, dyf-6, dyf-11, dyf-13, ift-20, ift-74, ift-81, ifta-2, osm-1, osm-5 and osm-6.

Its subcellular location is the cell projection. It is found in the cilium. Component of the intraflagellar transport (IFT) complex B required for transport of proteins in the motile cilium. May be required for ciliary entrance and transport of specific ciliary cargo proteins such as che-3 which are related to motility. This Caenorhabditis elegans protein is Intraflagellar transport protein 56 homolog.